The primary structure comprises 549 residues: Speedy protein E3 (549 aa).

Positions 1-15 (MTSHQPQPQEEQSPQ) are enriched in low complexity. Disordered stretches follow at residues 1 to 74 (MTSH…EPEE), 126 to 145 (KRECLDESDDEPEKELAPEP), 188 to 218 (SPPRRSLGCKRKRECLDESDDEPEKELAPEP), 261 to 291 (SPPRRSLGCKRKRECLDESDDEPEKELAPEP), and 334 to 364 (SPPRRSLGCKRKRECLDESDDEPEKELAPEP). Composition is skewed to acidic residues over residues 58–74 (DESDDEPEKELAPEPEE), 131–145 (DESDDEPEKELAPEP), 204–218 (DESDDEPEKELAPEP), 277–291 (DESDDEPEKELAPEP), and 350–364 (DESDDEPEKELAPEP).

The protein belongs to the Speedy/Ringo family. As to expression, predominantly expressed in testis and spleen.

The polypeptide is Speedy protein E3 (Homo sapiens (Human)).